Reading from the N-terminus, the 322-residue chain is Mas-related G-protein coupled receptor member X3 (322 aa).

Over 1–31 (MDPTIPALGTSQTPINRREETPCYKQTLSLT) the chain is Extracellular. Residues 32-52 (VLTCIISLVGLTGNAVVLWLL) form a helical membrane-spanning segment. Over 53–60 (GFRMRRNA) the chain is Cytoplasmic. A helical transmembrane segment spans residues 61-81 (VSTYILNLAAVDFLFLSGHIV). Residues 82-96 (RSPLRLISIRHPISK) lie on the Extracellular side of the membrane. Residues 97–117 (IVNPVMTFPYFIGLSMLSAIS) traverse the membrane as a helical segment. The Cytoplasmic portion of the chain corresponds to 118-139 (TERCLSVLWPMWYRCRRPRHLS). A helical membrane pass occupies residues 140–160 (VVVCVLLWALSLLRSILEWMF). At 161–177 (CDFLFSGADSVWCETSD) the chain is on the extracellular side. Residues 178-198 (FITIAWLIFLCVVLCGSSLVL) form a helical membrane-spanning segment. Over 199–213 (LVRILCGSRKMPLTR) the chain is Cytoplasmic. A helical transmembrane segment spans residues 214-234 (LYVTILLTVLVFLLCGLPFGI). Topologically, residues 235-254 (QWALFSRIHLDWKVLFCHVH) are extracellular. A helical membrane pass occupies residues 255–275 (LISVFLSSLNSSANPIIYFFV). Over 276–322 (GSFRQRQNRQNLKLVLQRALQDTPEVDEGGGRLPEETLELSVSRLEQ) the chain is Cytoplasmic.

Belongs to the G-protein coupled receptor 1 family. Mas subfamily.

The protein localises to the cell membrane. Orphan receptor. Probably involved in the function of nociceptive neurons. May regulate nociceptor function and/or development, including the sensation or modulation of pain. Potently activated by enkephalins. This chain is Mas-related G-protein coupled receptor member X3 (MRGPRX3), found in Macaca mulatta (Rhesus macaque).